Reading from the N-terminus, the 87-residue chain is Large ribosomal subunit protein bL31B (87 aa).

It belongs to the bacterial ribosomal protein bL31 family. Type B subfamily. As to quaternary structure, part of the 50S ribosomal subunit.

The chain is Large ribosomal subunit protein bL31B from Latilactobacillus sakei subsp. sakei (strain 23K) (Lactobacillus sakei subsp. sakei).